A 227-amino-acid chain; its full sequence is uncharacterized protein (227 aa).

This sequence belongs to the flavoredoxin family. FMN is required as a cofactor.

This is an uncharacterized protein from Deinococcus radiodurans (strain ATCC 13939 / DSM 20539 / JCM 16871 / CCUG 27074 / LMG 4051 / NBRC 15346 / NCIMB 9279 / VKM B-1422 / R1).